Here is a 198-residue protein sequence, read N- to C-terminus: NADH-quinone oxidoreductase subunit C (198 aa).

Belongs to the complex I 30 kDa subunit family. In terms of assembly, NDH-1 is composed of 14 different subunits. Subunits NuoB, C, D, E, F, and G constitute the peripheral sector of the complex.

The protein localises to the cell inner membrane. It catalyses the reaction a quinone + NADH + 5 H(+)(in) = a quinol + NAD(+) + 4 H(+)(out). NDH-1 shuttles electrons from NADH, via FMN and iron-sulfur (Fe-S) centers, to quinones in the respiratory chain. The immediate electron acceptor for the enzyme in this species is believed to be ubiquinone. Couples the redox reaction to proton translocation (for every two electrons transferred, four hydrogen ions are translocated across the cytoplasmic membrane), and thus conserves the redox energy in a proton gradient. The polypeptide is NADH-quinone oxidoreductase subunit C (Janthinobacterium sp. (strain Marseille) (Minibacterium massiliensis)).